A 357-amino-acid chain; its full sequence is MSHNSFGHLFRVTTWGESHGPAIGCVVDGCPPRLPLSEADIQPWLDRRRPGQSKFTTQRQEPDAVEILSGVFEGQTTGTPISLLIRNTDQRSRDYGDIAERYRPGHADVAYDLKYGIRDYRGGGRSSARETAMRVAAGAVARRVLGEGVRIRGALTQIGAHRVDRARWDWDAVDTNPFFCPDPAMVPVWEEYLGAVRKAGSSIGAVIEIVAEGVPAGWGAPVYGKLDSDLAMALMSINAVKGIEIGDGFAAAELTGEENADPMRMVDGRLTFGANHAGGVLGGISTGQPLVARFAVKPTSSILAPVDSVTRGGENVEVSTRGRHDPCVGIRAVPVGEAMMACVLADHFLRHRAQVGP.

Position 48 (R48) interacts with NADP(+). FMN is bound by residues 125 to 127 (RSS), 238 to 239 (NA), G282, 297 to 301 (KPTSS), and R323.

The protein belongs to the chorismate synthase family. Homotetramer. FMNH2 is required as a cofactor.

The catalysed reaction is 5-O-(1-carboxyvinyl)-3-phosphoshikimate = chorismate + phosphate. The protein operates within metabolic intermediate biosynthesis; chorismate biosynthesis; chorismate from D-erythrose 4-phosphate and phosphoenolpyruvate: step 7/7. In terms of biological role, catalyzes the anti-1,4-elimination of the C-3 phosphate and the C-6 proR hydrogen from 5-enolpyruvylshikimate-3-phosphate (EPSP) to yield chorismate, which is the branch point compound that serves as the starting substrate for the three terminal pathways of aromatic amino acid biosynthesis. This reaction introduces a second double bond into the aromatic ring system. This chain is Chorismate synthase, found in Gluconacetobacter diazotrophicus (strain ATCC 49037 / DSM 5601 / CCUG 37298 / CIP 103539 / LMG 7603 / PAl5).